Consider the following 125-residue polypeptide: MALKDTAKKMTDLLESIQQNLLKAEKGNKAAAQRVRTESIKLEKIAKVYRKESIKAEKMGLMKKSKAAAKKAKAAAKKPVRAAKTVAKKACTKRTCATKAKVKPTKKAAPKTKVKTAKKTRSTKK.

Residues 98 to 125 (TKAKVKPTKKAAPKTKVKTAKKTRSTKK) are disordered. The segment covering 100 to 125 (AKVKPTKKAAPKTKVKTAKKTRSTKK) has biased composition (basic residues).

This sequence belongs to the histone H1/H5 family. HCT subfamily.

In terms of biological role, might have a role analogous to that of eukaryotic histone proteins. The sequence is that of Histone H1-like protein Hc1 (hctA) from Chlamydia trachomatis serovar D (strain ATCC VR-885 / DSM 19411 / UW-3/Cx).